The sequence spans 86 residues: MEKLTILILVATVLLAIQVLVQSDGENPVKGRVKHYAAKRFSALFRGPRECTTKHRRCEKDEECCPNLECKCLTSPDCQSGYKCKP.

Positions 1-23 (MEKLTILILVATVLLAIQVLVQS) are cleaved as a signal peptide. Residues 24–49 (DGENPVKGRVKHYAAKRFSALFRGPR) constitute a propeptide that is removed on maturation.

Belongs to the conotoxin O2 superfamily. Post-translationally, contains 4 disulfide bonds. As to expression, expressed by the venom duct.

The protein resides in the secreted. The polypeptide is Conotoxin Lt15a (Conus litteratus (Lettered cone)).